Reading from the N-terminus, the 324-residue chain is NAD(P)H-dependent D-xylose reductase xyl1 (324 aa).

The active-site Proton donor is the Tyr-50. A substrate-binding site is contributed by His-112. NAD(+) contacts are provided by residues 168–169 (SN), 217–226 (SSFGPTGFME), and 273–283 (KTSRPEVMAQN).

It belongs to the aldo/keto reductase family.

It carries out the reaction an alditol + NAD(+) = an aldose + NADH + H(+). The catalysed reaction is an alditol + NADP(+) = an aldose + NADPH + H(+). The enzyme catalyses xylitol + NAD(+) = D-xylose + NADH + H(+). It catalyses the reaction xylitol + NADP(+) = D-xylose + NADPH + H(+). It participates in carbohydrate metabolism; D-xylose degradation. The protein operates within carbohydrate degradation; L-arabinose degradation via L-arabinitol; D-xylulose 5-phosphate from L-arabinose (fungal route): step 1/5. In terms of biological role, catalyzes the initial reaction in the xylose utilization pathway by reducing D-xylose into xylitol. Xylose is a major component of hemicelluloses such as xylan. Most fungi utilize D-xylose via three enzymatic reactions, xylose reductase (XR), xylitol dehydrogenase (XDH), and xylulokinase, to form xylulose 5-phosphate, which enters pentose phosphate pathway. Also major aldose reductase in pentose and D-galactose catabolism. Reduces the pentose L-arabinose and the hexose D-galactose to their respective polyols. Responsible for extracellular beta-galactosidase formation and cellulase induction during growth on lactose. The polypeptide is NAD(P)H-dependent D-xylose reductase xyl1 (xyl1) (Hypocrea jecorina (Trichoderma reesei)).